The sequence spans 108 residues: Urease subunit gamma (108 aa).

The protein belongs to the urease gamma subunit family. Heterotrimer of UreA (gamma), UreB (beta) and UreC (alpha) subunits. Three heterotrimers associate to form the active enzyme.

Its subcellular location is the cytoplasm. It catalyses the reaction urea + 2 H2O + H(+) = hydrogencarbonate + 2 NH4(+). The protein operates within nitrogen metabolism; urea degradation; CO(2) and NH(3) from urea (urease route): step 1/1. The polypeptide is Urease subunit gamma (Haloquadratum walsbyi (strain DSM 16790 / HBSQ001)).